The sequence spans 472 residues: Ammonium transporter Rh type C (472 aa).

The Cytoplasmic portion of the chain corresponds to 1-9 (MAWNTNLRW). A helical transmembrane segment spans residues 10–30 (RLPLTCLLLEVVMVILFGVFV). The Extracellular portion of the chain corresponds to 31–51 (RYDFDADAHWWSWRTEFYYRY). Residues 52 to 72 (PSFQDVHVMVFVGFGFLMTFL) traverse the membrane as a helical segment. Residues 73–76 (QRYG) lie on the Cytoplasmic side of the membrane. Residues 77-97 (FSAVGFNFLLAAFGIQWALLM) form a helical membrane-spanning segment. Topologically, residues 98–114 (QGWFHFLQGRYIVVGVE) are extracellular. Residues 115–135 (NLINADFCVASVCVAFGAVLG) form a helical membrane-spanning segment. At 136–139 (KVSP) the chain is on the cytoplasmic side. Residues 140-160 (IQLLIMTFFQVTLFAVNEFIL) form a helical membrane-spanning segment. At 161 to 168 (LNLLKVKD) the chain is on the extracellular side. A helical transmembrane segment spans residues 169 to 191 (AGGSMTIHTFGAYFGLTVTRILY). The Cytoplasmic portion of the chain corresponds to 192-209 (RRNLEQSKERQNSVYQSD). A helical transmembrane segment spans residues 210–230 (LFAMIGTLFLWMYWPSFNSAI). Over 231 to 241 (SYHGDSQHRAA) the chain is Extracellular. Residues 242–262 (INTYCSLAACVLTSVAISSAL) traverse the membrane as a helical segment. The Cytoplasmic segment spans residues 263–294 (HKKGKLDMVHIQNATPAGGVAVGTAAEMMLMP). The helical transmembrane segment at 295-315 (YGALIVGFVCGIISTLGFVYL) threads the bilayer. The Extracellular portion of the chain corresponds to 316-336 (TPFLESRLHIQDTCGINNLHG). Residues 337–357 (IPGIIGGIVGAVTAASASLEV) traverse the membrane as a helical segment. Residues 358–388 (YGKEGLVHSFDFQGFKRDWTARTQGKFQIYG) lie on the Cytoplasmic side of the membrane. A helical transmembrane segment spans residues 389 to 409 (LLVTLAMALMGGIIVGVGLIL). At 410 to 450 (RLPFWGQPSDENCFEDAVYWEMPEGNSTVYIPEDPTFKPSG) the chain is on the extracellular side. A glycan (N-linked (GlcNAc...) asparagine) is linked at N435. The helical transmembrane segment at 451–471 (PSVPSVPMVSPLPMASSVPLV) threads the bilayer. P472 is a topological domain (cytoplasmic).

The protein belongs to the ammonium transporter (TC 2.A.49) family. Rh subfamily. Homotrimer. In terms of processing, N-glycosylated.

The protein localises to the cell membrane. The protein resides in the apical cell membrane. The catalysed reaction is NH4(+)(in) = NH4(+)(out). The enzyme catalyses methylamine(out) = methylamine(in). It catalyses the reaction CO2(out) = CO2(in). In terms of biological role, ammonium transporter involved in the maintenance of acid-base homeostasis. Transports ammonium and its related derivative methylammonium across the plasma membrane of epithelial cells likely contributing to renal transepithelial ammonia transport and ammonia metabolism. Postulated to primarily mediate an electroneutral bidirectional transport of NH3 ammonia species according to a mechanism that implies interaction of an NH4(+) ion with acidic residues of the pore entry followed by dissociation of NH4(+) into NH3 and H(+). As a result NH3 transits through the central pore and is protonated on the extracellular side reforming NH4(+). May act as a CO2 channel providing for renal acid secretion. The polypeptide is Ammonium transporter Rh type C (RHCG) (Pongo abelii (Sumatran orangutan)).